We begin with the raw amino-acid sequence, 579 residues long: Matrix metalloproteinase-C (579 aa).

Residues 1–17 (MRLIYVIAILLVSTCQA) form the signal peptide. A propeptide spans 18 to 129 (GFFSSLVSRF…SRCGVTDAPL (112 aa)) (activation peptide). The interval 32–51 (NSSPSSSSSSSSFSNSRKPS) is disordered. The segment covering 33–50 (SSPSSSSSSSSFSNSRKP) has biased composition (low complexity). Residues 120-127 (SRCGVTDA) carry the Cysteine switch motif. Zn(2+)-binding residues include Cys-122, His-200, Asp-202, His-215, and His-225. N-linked (GlcNAc...) asparagine glycosylation is present at Asn-231. His-254 is a binding site for Zn(2+). The active site involves Glu-255. Zn(2+) is bound by residues His-258 and His-264. The interval 307-394 (SGRSSSGSDF…SSSGSSGGGC (88 aa)) is disordered. Gly residues predominate over residues 315–324 (DFGGSSGGGS). Low complexity predominate over residues 325 to 341 (RTTARPTTTTRSWFGRF). Over residues 373–394 (WGSGSGSSGRGGSSSGSSGGGC) the composition is skewed to gly residues. Hemopexin repeat units follow at residues 395 to 437 (PSHI…FPSA) and 438 to 490 (PTPV…LGFS).

Belongs to the peptidase M10A family. Requires Zn(2+) as cofactor.

It localises to the secreted. Its subcellular location is the extracellular space. The protein localises to the extracellular matrix. Its activity is regulated as follows. Inhibited by human TIMP1 and TIMP2 and the broad MMP inhibitors BB94 (Batimastat) and CT543. Functionally, metalloproteinase. The sequence is that of Matrix metalloproteinase-C from Caenorhabditis elegans.